Reading from the N-terminus, the 76-residue chain is Translational regulator CsrA (76 aa).

Belongs to the CsrA/RsmA family. Homodimer; the beta-strands of each monomer intercalate to form a hydrophobic core, while the alpha-helices form wings that extend away from the core.

It is found in the cytoplasm. In terms of biological role, a translational regulator that binds mRNA to regulate translation initiation and/or mRNA stability. Usually binds in the 5'-UTR at or near the Shine-Dalgarno sequence preventing ribosome-binding, thus repressing translation. Its main target seems to be the major flagellin gene, while its function is anatagonized by FliW. The chain is Translational regulator CsrA from Helicobacter pylori (strain J99 / ATCC 700824) (Campylobacter pylori J99).